Reading from the N-terminus, the 253-residue chain is Imidazole glycerol phosphate synthase subunit HisF (253 aa).

Residues aspartate 11 and aspartate 130 contribute to the active site.

It belongs to the HisA/HisF family. Heterodimer of HisH and HisF.

The protein resides in the cytoplasm. It catalyses the reaction 5-[(5-phospho-1-deoxy-D-ribulos-1-ylimino)methylamino]-1-(5-phospho-beta-D-ribosyl)imidazole-4-carboxamide + L-glutamine = D-erythro-1-(imidazol-4-yl)glycerol 3-phosphate + 5-amino-1-(5-phospho-beta-D-ribosyl)imidazole-4-carboxamide + L-glutamate + H(+). It functions in the pathway amino-acid biosynthesis; L-histidine biosynthesis; L-histidine from 5-phospho-alpha-D-ribose 1-diphosphate: step 5/9. Its function is as follows. IGPS catalyzes the conversion of PRFAR and glutamine to IGP, AICAR and glutamate. The HisF subunit catalyzes the cyclization activity that produces IGP and AICAR from PRFAR using the ammonia provided by the HisH subunit. In Opitutus terrae (strain DSM 11246 / JCM 15787 / PB90-1), this protein is Imidazole glycerol phosphate synthase subunit HisF.